The following is a 452-amino-acid chain: Zinc finger protein 277 (452 aa).

The C2H2-type 1 zinc-finger motif lies at 200–224; the sequence is LMCLYCEKIFRDRPTLKEHMRKKGH. Residues 248–271 form a disordered region; sequence APTPRKQHLQKRRRETASVSTVAD. Over residues 252–261 the composition is skewed to basic residues; the sequence is RKQHLQKRRR. The segment at 361 to 385 adopts a C2H2-type 2 zinc-finger fold; that stretch reads LRCVTCDLQFDEEELLVEHMAQESH.

The protein belongs to the ZNF277 family. Interacts with components of the origin recognition complex (ORC) complex, Orc2 and Orc3, components of the SAGA transcription coactivator-HAT complex, Gcn5 and e(y)2, components of the mRNP biogenesis THO complex, thoc5 and e(y)2, and a component of the TFIID complex, TBP. Also interacts with polybromo, a component of the chromatin remodeling SWI/SNF complex.

It localises to the nucleus. The protein localises to the cytoplasm. Functionally, DNA binding protein which is involved in the positive regulation of both basal and inducible transcription. Mainly localizes to active promoter sites and interacts with components of various transcription and replication regulatory complexes, such as the ORC, SAGA, THO, TFIID and SWI/SNF complexes. It may therefore regulate transcription by promoting the association of these complexes to their binding sites. This chain is Zinc finger protein 277, found in Drosophila melanogaster (Fruit fly).